We begin with the raw amino-acid sequence, 753 residues long: Metal regulatory transcription factor 1 (753 aa).

Residue Gly-2 is modified to N-acetylglycine. Residue Ser-5 is modified to Phosphoserine. Residues 133-138 (KRKEVK) carry the Nuclear localization signal motif. C2H2-type zinc fingers lie at residues 140–164 (YQCT…QKTH), 170–194 (FVCN…VRVH), 200–224 (FECD…QRLH), 229–253 (FNCE…IRTH), 259–283 (FRCD…VRTH), and 289–313 (FFCP…MKGH). Ser-305 is subject to Phosphoserine. Disordered stretches follow at residues 308–328 (SHMK…QHNG), 395–466 (ESFN…ALLQ), and 648–715 (SRRK…LSAM). The segment covering 408–417 (PPSTGNSASL) has biased composition (polar residues). Over residues 655 to 666 (SPPPPEPSPQAP) the composition is skewed to pro residues. A compositionally biased stretch (low complexity) spans 679–698 (SSAPVPGSSSSTLPSSCEQS). Polar residues predominate over residues 700–712 (QAETPSDPQTETL).

It localises to the nucleus. Its subcellular location is the cytoplasm. Zinc-dependent transcriptional regulator of cellular adaption to conditions of exposure to heavy metals. Binds to metal responsive elements (MRE) in promoters and activates the transcription of metallothionein genes like metallothionein-2/MT2A. Also regulates the expression of metalloproteases in response to intracellular zinc and functions as a catabolic regulator of cartilages. The polypeptide is Metal regulatory transcription factor 1 (MTF1) (Homo sapiens (Human)).